Here is a 153-residue protein sequence, read N- to C-terminus: Ribosomal RNA large subunit methyltransferase H (153 aa).

S-adenosyl-L-methionine-binding positions include leucine 70, glycine 102, and 121–126; that span reads LSRMTF.

It belongs to the RNA methyltransferase RlmH family. As to quaternary structure, homodimer.

It is found in the cytoplasm. It carries out the reaction pseudouridine(1915) in 23S rRNA + S-adenosyl-L-methionine = N(3)-methylpseudouridine(1915) in 23S rRNA + S-adenosyl-L-homocysteine + H(+). Its function is as follows. Specifically methylates the pseudouridine at position 1915 (m3Psi1915) in 23S rRNA. The polypeptide is Ribosomal RNA large subunit methyltransferase H (Geotalea uraniireducens (strain Rf4) (Geobacter uraniireducens)).